A 173-amino-acid polypeptide reads, in one-letter code: Ribosome maturation factor RimM (173 aa).

The 73-residue stretch at 94-166 folds into the PRC barrel domain; sequence VQEEPYIDII…KIIVELPMGF (73 aa).

This sequence belongs to the RimM family. In terms of assembly, binds ribosomal protein uS19.

The protein resides in the cytoplasm. An accessory protein needed during the final step in the assembly of 30S ribosomal subunit, possibly for assembly of the head region. Essential for efficient processing of 16S rRNA. May be needed both before and after RbfA during the maturation of 16S rRNA. It has affinity for free ribosomal 30S subunits but not for 70S ribosomes. The chain is Ribosome maturation factor RimM from Amoebophilus asiaticus (strain 5a2).